The chain runs to 408 residues: UDP-N-acetylglucosamine--dolichyl-phosphate N-acetylglucosaminephosphotransferase (408 aa).

Over M1 to P10 the chain is Lumenal. Residues L11–A38 form a helical membrane-spanning segment. The Cytoplasmic segment spans residues A39–Q58. UDP-N-acetyl-alpha-D-glucosamine is bound by residues Q44 to L46 and E56. The chain crosses the membrane as a helical span at residues G59–F78. Residues L79–P91 are Lumenal-facing. A helical transmembrane segment spans residues H92 to L118. Residues N119 to P121 are Cytoplasmic-facing. Residues W122–N143 form a helical membrane-spanning segment. K125 contributes to the dolichyl phosphate binding site. The Lumenal segment spans residues F144 to G166. N-linked (GlcNAc...) asparagine glycosylation occurs at N146. Residues I167–I186 traverse the membrane as a helical segment. V178–I186 is a dolichyl phosphate binding site. Mg(2+) is bound at residue N185. Residues L187–G192 are Cytoplasmic-facing. Residue N191 participates in UDP-N-acetyl-alpha-D-glucosamine binding. Residues L193–L213 traverse the membrane as a helical segment. At E214–R218 the chain is on the lumenal side. The chain crosses the membrane as a helical span at residues D219–N242. Over W243 to V250 the chain is Cytoplasmic. A helical membrane pass occupies residues G251–G269. Residue D252 coordinates Mg(2+). The Lumenal portion of the chain corresponds to H270 to F271. A helical transmembrane segment spans residues S272–L293. At L294 to H375 the chain is on the cytoplasmic side. R301–R303 contacts UDP-N-acetyl-alpha-D-glucosamine. The chain crosses the membrane as a helical span at residues E376–Q400. At L401–V408 the chain is on the lumenal side.

Belongs to the glycosyltransferase 4 family. Homodimer. It depends on Mg(2+) as a cofactor.

The protein localises to the endoplasmic reticulum membrane. The enzyme catalyses a di-trans,poly-cis-dolichyl phosphate + UDP-N-acetyl-alpha-D-glucosamine = an N-acetyl-alpha-D-glucosaminyl-diphospho-di-trans,poly-cis-dolichol + UMP. The protein operates within protein modification; protein glycosylation. Its activity is regulated as follows. Inhibited by natural nucleoside antibiotic tunicamycin, which acts as a structural analog and competitor of UDP-GlcNAc. In terms of biological role, UDP-N-acetylglucosamine--dolichyl-phosphate N-acetylglucosaminephosphotransferase that operates in the biosynthetic pathway of dolichol-linked oligosaccharides, the glycan precursors employed in protein asparagine (N)-glycosylation. The assembly of dolichol-linked oligosaccharides begins on the cytosolic side of the endoplasmic reticulum membrane and finishes in its lumen. The sequential addition of sugars to dolichol pyrophosphate produces dolichol-linked oligosaccharides containing fourteen sugars, including two GlcNAcs, nine mannoses and three glucoses. Once assembled, the oligosaccharide is transferred from the lipid to nascent proteins by oligosaccharyltransferases. Catalyzes the initial step of dolichol-linked oligosaccharide biosynthesis, transfering GlcNAc-1-P from cytosolic UDP-GlcNAc onto the carrier lipid dolichyl phosphate (P-dolichol), yielding GlcNAc-P-P-dolichol embedded in the cytoplasmic leaflet of the endoplasmic reticulum membrane. In Cricetulus longicaudatus (Long-tailed dwarf hamster), this protein is UDP-N-acetylglucosamine--dolichyl-phosphate N-acetylglucosaminephosphotransferase (DPAGT1).